A 387-amino-acid chain; its full sequence is Exodeoxyribonuclease 7 large subunit (387 aa).

Belongs to the XseA family. As to quaternary structure, heterooligomer composed of large and small subunits.

It is found in the cytoplasm. It carries out the reaction Exonucleolytic cleavage in either 5'- to 3'- or 3'- to 5'-direction to yield nucleoside 5'-phosphates.. Bidirectionally degrades single-stranded DNA into large acid-insoluble oligonucleotides, which are then degraded further into small acid-soluble oligonucleotides. The chain is Exodeoxyribonuclease 7 large subunit from Campylobacter jejuni subsp. doylei (strain ATCC BAA-1458 / RM4099 / 269.97).